Consider the following 530-residue polypeptide: MFSQFFILNNKGETIIFKDYRFDISKDSNEIFFKHVQSMKSEITPAFNIDGINYLYIKKREMYFVFTTRLLVSPSLGFELLNRASKIIQDYTASLTEEAIRLNFILIYELLDELMDYGVPQSTGTETLKAFVFTPPKQIKSKQLESDSIIDNFLKATNKISVPPKQGVKPIHSGSKNSSSGGSSLSTNTVSKVVNNIVDSISGAATNLHNSTSGGGSGSGVTDADGDNEIYIDLCERLTVLYSSNGTILRNEITGKIQMKSYLRGNPALSLGLSPEFTFKTIANRDESNENEIDNNNIGGVSNLSAPSSNTTSFIVDDCSFHECAGSGFQPNNTINFKPPQGDFTLLKYRISNNNYTPFLVKTNLESTIRNRFDLVVTIRSNFSNKVVPNFIFVSIPVPKSTKSLTHSLDYGSQNQKVEYKQSTQAGNLVFWSIKKLRGGMETILRIQIHVDGATSSSSNNNQQQQQPQIDVGSTLRKEIGPIGLEFSIPQFSCSTLQIKFLKMLGSNISPIRWIRYITDSKSFVSRINN.

The segment at 164-187 (PKQGVKPIHSGSKNSSSGGSSLST) is disordered. The segment covering 173–186 (SGSKNSSSGGSSLS) has biased composition (low complexity). The MHD domain maps to 227–527 (DNEIYIDLCE…ITDSKSFVSR (301 aa)).

This sequence belongs to the adaptor complexes medium subunit family. May be part of the adaptor protein complex 4 (AP-4), a heterotetramer composed of two large adaptins (epsilon-type subunitand beta-type subunit), a medium adaptin (mu-type subunit) and a small adaptin (sigma-type).

It is found in the golgi apparatus. It localises to the trans-Golgi network membrane. The protein resides in the early endosome. In terms of biological role, probable component of an adaptor protein complex. Adaptor protein complexes are vesicle coat components involved both in vesicle formation and cargo selection. They control the vesicular transport of proteins in different trafficking pathways. This is AP-4 complex subunit mu (apm4) from Dictyostelium discoideum (Social amoeba).